The following is a 218-amino-acid chain: UPF0329 protein ECU10_1860 (218 aa).

It belongs to the UPF0329 family.

This is UPF0329 protein ECU10_1860 from Encephalitozoon cuniculi (strain GB-M1) (Microsporidian parasite).